The following is a 463-amino-acid chain: Bifunctional protein HldE (463 aa).

The tract at residues 1 to 315 (MKKILVIGDL…LILNQTHPKI (315 aa)) is ribokinase. Residue 191–194 (NRAE) coordinates ATP. Residue Asp-260 is part of the active site. Residues 334-463 (FTNGCFDILH…IEKIKRTHND (130 aa)) are cytidylyltransferase.

The protein in the N-terminal section; belongs to the carbohydrate kinase PfkB family. It in the C-terminal section; belongs to the cytidylyltransferase family. Homodimer.

The enzyme catalyses D-glycero-beta-D-manno-heptose 7-phosphate + ATP = D-glycero-beta-D-manno-heptose 1,7-bisphosphate + ADP + H(+). It carries out the reaction D-glycero-beta-D-manno-heptose 1-phosphate + ATP + H(+) = ADP-D-glycero-beta-D-manno-heptose + diphosphate. Its pathway is nucleotide-sugar biosynthesis; ADP-L-glycero-beta-D-manno-heptose biosynthesis; ADP-L-glycero-beta-D-manno-heptose from D-glycero-beta-D-manno-heptose 7-phosphate: step 1/4. It participates in nucleotide-sugar biosynthesis; ADP-L-glycero-beta-D-manno-heptose biosynthesis; ADP-L-glycero-beta-D-manno-heptose from D-glycero-beta-D-manno-heptose 7-phosphate: step 3/4. The protein operates within bacterial outer membrane biogenesis; LPS core biosynthesis. In terms of biological role, catalyzes the phosphorylation of D-glycero-D-manno-heptose 7-phosphate at the C-1 position to selectively form D-glycero-beta-D-manno-heptose-1,7-bisphosphate. Catalyzes the ADP transfer from ATP to D-glycero-beta-D-manno-heptose 1-phosphate, yielding ADP-D-glycero-beta-D-manno-heptose. The polypeptide is Bifunctional protein HldE (Helicobacter pylori (strain J99 / ATCC 700824) (Campylobacter pylori J99)).